The sequence spans 203 residues: Thymidylate kinase (203 aa).

Residue Gly-9–Thr-16 coordinates ATP.

Belongs to the thymidylate kinase family.

The catalysed reaction is dTMP + ATP = dTDP + ADP. In terms of biological role, phosphorylation of dTMP to form dTDP in both de novo and salvage pathways of dTTP synthesis. The sequence is that of Thymidylate kinase from Staphylococcus haemolyticus (strain JCSC1435).